We begin with the raw amino-acid sequence, 503 residues long: Aromatase (503 aa).

Substrate contacts are provided by Asp309 and Met374. Cys437 serves as a coordination point for heme.

This sequence belongs to the cytochrome P450 family. Requires heme as cofactor.

It localises to the membrane. It catalyses the reaction testosterone + 3 reduced [NADPH--hemoprotein reductase] + 3 O2 = 17beta-estradiol + formate + 3 oxidized [NADPH--hemoprotein reductase] + 4 H2O + 4 H(+). It carries out the reaction androst-4-ene-3,17-dione + 3 reduced [NADPH--hemoprotein reductase] + 3 O2 = estrone + formate + 3 oxidized [NADPH--hemoprotein reductase] + 4 H2O + 4 H(+). Functionally, catalyzes the formation of aromatic C18 estrogens from C19 androgens. In Callithrix jacchus (White-tufted-ear marmoset), this protein is Aromatase (CYP19A1).